The primary structure comprises 248 residues: Cytochrome c oxidase subunit 2 (248 aa).

The Mitochondrial intermembrane segment spans residues 1–39; the sequence is MMKELLMNNMLNDVPTPWAMYFQDSATPNMEGIMELHNN. Residues 40–56 form a helical membrane-spanning segment; that stretch reads VVFYLIIMLCFVTYMLY. The Mitochondrial matrix segment spans residues 57 to 87; it reads NISTVYNKSAVAYKYMNHGQFIEMVWTTFPA. Residues 88–104 form a helical membrane-spanning segment; sequence VMLLIMAFPSFMLLYIC. The Mitochondrial intermembrane segment spans residues 105-248; sequence DEVMAPAMTI…ADFLTWIDEQ (144 aa). Residues histidine 183, cysteine 218, glutamate 220, cysteine 222, histidine 226, and methionine 229 each contribute to the Cu cation site. Glutamate 220 contacts Mg(2+).

Belongs to the cytochrome c oxidase subunit 2 family. Component of the cytochrome c oxidase (complex IV, CIV), a multisubunit enzyme composed of a catalytic core of 3 subunits and several supernumerary subunits. The complex exists as a monomer or a dimer and forms supercomplexes (SCs) in the inner mitochondrial membrane with ubiquinol-cytochrome c oxidoreductase (cytochrome b-c1 complex, complex III, CIII). Cu cation is required as a cofactor.

Its subcellular location is the mitochondrion inner membrane. The enzyme catalyses 4 Fe(II)-[cytochrome c] + O2 + 8 H(+)(in) = 4 Fe(III)-[cytochrome c] + 2 H2O + 4 H(+)(out). Its function is as follows. Component of the cytochrome c oxidase, the last enzyme in the mitochondrial electron transport chain which drives oxidative phosphorylation. The respiratory chain contains 3 multisubunit complexes succinate dehydrogenase (complex II, CII), ubiquinol-cytochrome c oxidoreductase (cytochrome b-c1 complex, complex III, CIII) and cytochrome c oxidase (complex IV, CIV), that cooperate to transfer electrons derived from NADH and succinate to molecular oxygen, creating an electrochemical gradient over the inner membrane that drives transmembrane transport and the ATP synthase. Cytochrome c oxidase is the component of the respiratory chain that catalyzes the reduction of oxygen to water. Electrons originating from reduced cytochrome c in the intermembrane space (IMS) are transferred via the dinuclear copper A center (CU(A)) of subunit 2 and heme A of subunit 1 to the active site in subunit 1, a binuclear center (BNC) formed by heme A3 and copper B (CU(B)). The BNC reduces molecular oxygen to 2 water molecules using 4 electrons from cytochrome c in the IMS and 4 protons from the mitochondrial matrix. The polypeptide is Cytochrome c oxidase subunit 2 (COX2) (Brettanomyces naardenensis (Yeast)).